The sequence spans 297 residues: Ribosomal RNA small subunit methyltransferase H (297 aa).

S-adenosyl-L-methionine contacts are provided by residues 37-39, D56, F87, D102, and H109; that span reads GGH.

This sequence belongs to the methyltransferase superfamily. RsmH family.

The protein resides in the cytoplasm. The enzyme catalyses cytidine(1402) in 16S rRNA + S-adenosyl-L-methionine = N(4)-methylcytidine(1402) in 16S rRNA + S-adenosyl-L-homocysteine + H(+). Specifically methylates the N4 position of cytidine in position 1402 (C1402) of 16S rRNA. This chain is Ribosomal RNA small subunit methyltransferase H, found in Borrelia turicatae (strain 91E135).